A 639-amino-acid chain; its full sequence is uncharacterized protein (639 aa).

The first 16 residues, 1-16 (MLTLYLFTATCCFVCA), serve as a signal peptide directing secretion. 2 disordered regions span residues 80–128 (RRRA…SDKL) and 432–488 (QTAT…TSRT). Composition is skewed to polar residues over residues 108–122 (TYAT…TASP) and 432–446 (QTAT…QQQP). The segment covering 465–480 (HGDEPHSDGELRRESH) has biased composition (basic and acidic residues).

This is an uncharacterized protein from Human cytomegalovirus (strain Merlin) (HHV-5).